We begin with the raw amino-acid sequence, 238 residues long: Probable transcriptional regulatory protein YeeN (238 aa).

Belongs to the TACO1 family. YeeN subfamily.

Its subcellular location is the cytoplasm. This Shigella sonnei (strain Ss046) protein is Probable transcriptional regulatory protein YeeN.